The primary structure comprises 1026 residues: Vacuolar protein sorting-associated protein 18 homolog (1026 aa).

Residues 858–896 (IVDFLKRNKQRLEKLERSMKEATEIASEIRDKQEKLKNR) adopt a coiled-coil conformation. Residues 906–932 (CSHCARPISGRAFNVHSCRHFFHRECL) form an RING-type; degenerate zinc finger.

In terms of assembly, probable core component of at least two putative endosomal tethering complexes, the homotypic fusion and vacuole protein sorting (HOPS) complex and the class C core vacuole/endosome tethering (CORVET) complex. Their common core is composed of the class C Vps proteins vps-11, vps-16 and vps-18, which in HOPS further associates with vps-33.1, vps-39 and vps-41 and in CORVET with vps-8 and vps-33.2. As to expression, in hermaphrodites, expressed in coelomocytes and gonadal sheath cells.

It localises to the cytoplasm. It is found in the late endosome membrane. The protein localises to the lysosome membrane. Its subcellular location is the early endosome. The protein resides in the cytoplasmic vesicle. It localises to the autophagosome. It is found in the clathrin-coated vesicle. Its function is as follows. Plays a role in vesicle-mediated protein trafficking to lysosomal compartments including the endocytic membrane transport and autophagic pathways. Believed to act as a core component of the putative HOPS and CORVET endosomal tethering complexes which are proposed to be involved in the rab-5-to-rab-7 endosome conversion probably implicating sand-1, and via binding SNAREs and SNARE complexes to mediate tethering and docking events during SNARE-mediated membrane fusion. The HOPS complex is proposed to be recruited to rab-7 on the late endosomal membrane and to regulate late endocytic, phagocytic and autophagic traffic towards lysosomes. Within the HOPS complex, contributes to the normal development of gut granules in intestinal cells of the embryo, and also promotes the trafficking of embryonic intestinal gut granules away from lysosomes. The CORVET complex is proposed to function as a rab-5 effector to mediate early endosome fusion probably in specific endosome subpopulations. Required for fusion of endosomes and autophagosomes with lysosomes. Plays a role in the degradation of apoptotic cells during programmed cell death. The chain is Vacuolar protein sorting-associated protein 18 homolog from Caenorhabditis elegans.